The following is a 228-amino-acid chain: Protein crossbronx homolog (228 aa).

One can recognise a UBC core domain in the interval 14-168 (LQEYKILAEY…VEQCVEDSQR (155 aa)).

The protein belongs to the ubiquitin-conjugating enzyme family. FTS subfamily.

This chain is Protein crossbronx homolog, found in Anopheles gambiae (African malaria mosquito).